Consider the following 147-residue polypeptide: 18 kDa antigen 1 (147 aa).

Positions 21 to 131 (TPTRPAVMPM…RPRKIAVGAA (111 aa)) constitute a sHSP domain.

The protein belongs to the small heat shock protein (HSP20) family.

In terms of biological role, not known. This protein is one of the major immune reactive proteins in mycobacteria. This Mycobacterium avium protein is 18 kDa antigen 1.